The primary structure comprises 228 residues: Ureidoacrylate amidohydrolase RutB (228 aa).

Catalysis depends on Asp23, which acts as the Proton acceptor. The active site involves Lys132. Cys165 (nucleophile) is an active-site residue.

This sequence belongs to the isochorismatase family. RutB subfamily.

It carries out the reaction (Z)-3-ureidoacrylate + H2O + H(+) = (Z)-3-aminoacrylate + NH4(+) + CO2. It catalyses the reaction (Z)-3-ureidoacrylate + H2O = (Z)-3-aminoacrylate + carbamate + H(+). The catalysed reaction is (Z)-2-methylureidoacrylate + H2O + H(+) = (Z)-2-methylaminoacrylate + NH4(+) + CO2. Functionally, hydrolyzes ureidoacrylate to form aminoacrylate and carbamate. The carbamate hydrolyzes spontaneously, thereby releasing one of the nitrogen atoms of the pyrimidine ring as ammonia and one of its carbon atoms as CO2. In Agrobacterium fabrum (strain C58 / ATCC 33970) (Agrobacterium tumefaciens (strain C58)), this protein is Ureidoacrylate amidohydrolase RutB.